The chain runs to 221 residues: Ribosomal RNA large subunit methyltransferase E (221 aa).

S-adenosyl-L-methionine contacts are provided by Gly-72, Trp-74, Asp-91, Asp-107, and Asp-131. The active-site Proton acceptor is Lys-171.

It belongs to the class I-like SAM-binding methyltransferase superfamily. RNA methyltransferase RlmE family.

It is found in the cytoplasm. It carries out the reaction uridine(2552) in 23S rRNA + S-adenosyl-L-methionine = 2'-O-methyluridine(2552) in 23S rRNA + S-adenosyl-L-homocysteine + H(+). In terms of biological role, specifically methylates the uridine in position 2552 of 23S rRNA at the 2'-O position of the ribose in the fully assembled 50S ribosomal subunit. The chain is Ribosomal RNA large subunit methyltransferase E from Zymomonas mobilis subsp. mobilis (strain ATCC 31821 / ZM4 / CP4).